A 209-amino-acid polypeptide reads, in one-letter code: N-(5'-phosphoribosyl)anthranilate isomerase (209 aa).

Belongs to the TrpF family.

The catalysed reaction is N-(5-phospho-beta-D-ribosyl)anthranilate = 1-(2-carboxyphenylamino)-1-deoxy-D-ribulose 5-phosphate. The protein operates within amino-acid biosynthesis; L-tryptophan biosynthesis; L-tryptophan from chorismate: step 3/5. The polypeptide is N-(5'-phosphoribosyl)anthranilate isomerase (Pelobacter propionicus (strain DSM 2379 / NBRC 103807 / OttBd1)).